The following is a 281-amino-acid chain: MKLIIISGRSGSGKSVALRALEDLGYYCVDNIPVNLLPTLTHTVVDEYDQVAVSIDVRNLPKNPDDLVEILDYLPSSWSMTIVYIDASDDVLVKRFSETRRLHPLAKLNKSLSEAIRAESALLAPIAERADLYLDTDKLTIHQLAELIRERILGKKSSRLVLVFESFGFKHGIPKDADYVFDARFLPNPHWEPDLKHLTGLDAPVEVFLGSQPVVTKFIWQIQNLITTWLPHLERNNRSYVTVAIGCTGGQHRSVYIAQTLSKTFSEIHPDVQIRHRELNQ.

8 to 15 lines the ATP pocket; that stretch reads GRSGSGKS. 56-59 lines the GTP pocket; it reads DVRN.

The protein belongs to the RapZ-like family.

Displays ATPase and GTPase activities. The sequence is that of Nucleotide-binding protein MADE_1004170 from Alteromonas mediterranea (strain DSM 17117 / CIP 110805 / LMG 28347 / Deep ecotype).